The sequence spans 125 residues: Small ribosomal subunit protein uS12m (125 aa).

The tract at residues 1 to 26 (MPTINQLLRKKSSRQAPKLKSKKPAL) is disordered. Residues 8 to 23 (LRKKSSRQAPKLKSKK) show a composition bias toward basic residues.

It belongs to the universal ribosomal protein uS12 family.

It localises to the mitochondrion. The protein is Small ribosomal subunit protein uS12m (RPS12) of Prototheca wickerhamii.